Consider the following 178-residue polypeptide: MEICRGPYSHLISLLLILLFRSESAGHPAGKRPCKMQAFRIWDTNQKTFYLRNNQLIAGYLQGPNTKLEEKIDMVPIDFRNVFLGIHGGKLCLSCVKSGDDTKLQLEEVNITDLNKNKEEDKRFTFIRSETGPTTSFESLACPGWFLCTTLEADHPVSLTNTPKEPCTVTKFYFQEDQ.

The signal sequence occupies residues 1 to 26 (MEICRGPYSHLISLLLILLFRSESAG). C92 and C142 form a disulfide bridge. A glycan (N-linked (GlcNAc...) asparagine) is linked at N110.

This sequence belongs to the IL-1 family.

The protein localises to the secreted. In terms of biological role, anti-inflammatory antagonist of interleukin-1 family of proinflammatory cytokines such as interleukin-1beta/IL1B and interleukin-1alpha/IL1A. Protects from immune dysregulation and uncontrolled systemic inflammation triggered by IL1 for a range of innate stimulatory agents such as pathogens. In Rattus norvegicus (Rat), this protein is Interleukin-1 receptor antagonist protein (Il1rn).